The primary structure comprises 207 residues: Outer-membrane lipoprotein LolB (207 aa).

Residues 1–21 form the signal peptide; sequence MPMRKRHFYRLLPLASLLLAA. A lipid anchor (N-palmitoyl cysteine) is attached at cysteine 22. A lipid anchor (S-diacylglycerol cysteine) is attached at cysteine 22.

The protein belongs to the LolB family. In terms of assembly, monomer.

The protein resides in the cell outer membrane. Plays a critical role in the incorporation of lipoproteins in the outer membrane after they are released by the LolA protein. The sequence is that of Outer-membrane lipoprotein LolB from Yersinia pseudotuberculosis serotype O:1b (strain IP 31758).